The sequence spans 111 residues: Translation initiation factor 1A (111 aa).

Positions 11 to 83 (KKIRLPKEGE…ERADVTWRYT (73 aa)) constitute an S1-like domain.

This sequence belongs to the eIF-1A family.

Seems to be required for maximal rate of protein biosynthesis. Enhances ribosome dissociation into subunits and stabilizes the binding of the initiator Met-tRNA(I) to 40 S ribosomal subunits. In Methanopyrus kandleri (strain AV19 / DSM 6324 / JCM 9639 / NBRC 100938), this protein is Translation initiation factor 1A (eIF1A).